The primary structure comprises 103 residues: Small ribosomal subunit protein uS10 (103 aa).

Belongs to the universal ribosomal protein uS10 family. Part of the 30S ribosomal subunit.

In terms of biological role, involved in the binding of tRNA to the ribosomes. In Bordetella avium (strain 197N), this protein is Small ribosomal subunit protein uS10.